The primary structure comprises 200 residues: Small ribosomal subunit protein uS4 (200 aa).

The segment at 22-42 (TGKELEKRPYAPGPHGPGQRK) is disordered. One can recognise an S4 RNA-binding domain in the interval 92–155 (TRLDNLVYRL…QNLAVVKESV (64 aa)).

It belongs to the universal ribosomal protein uS4 family. In terms of assembly, part of the 30S ribosomal subunit. Contacts protein S5. The interaction surface between S4 and S5 is involved in control of translational fidelity.

Its function is as follows. One of the primary rRNA binding proteins, it binds directly to 16S rRNA where it nucleates assembly of the body of the 30S subunit. Functionally, with S5 and S12 plays an important role in translational accuracy. The sequence is that of Small ribosomal subunit protein uS4 from Bacillus pumilus (strain SAFR-032).